Consider the following 155-residue polypeptide: MPGFIGREQHSVDEKGRLLIPARFRRRFLLQENDPATGAPSRSPVLYVFKADDGSLELYEPSVWSEKEQQLLKLSDFNPDERLLTTMIYARLDQTELDRSGRIALSREMLDHAGIVKDAVIIGANAKMTVWEPLRLERLLSDNASRFAPLANRYI.

2 SpoVT-AbrB domains span residues 7–63 (REQH…EPSV) and 92–135 (LDQT…EPLR).

This sequence belongs to the MraZ family. Forms oligomers.

It localises to the cytoplasm. Its subcellular location is the nucleoid. The protein is Transcriptional regulator MraZ of Chlorobaculum tepidum (strain ATCC 49652 / DSM 12025 / NBRC 103806 / TLS) (Chlorobium tepidum).